We begin with the raw amino-acid sequence, 138 residues long: MALHIHEACILLLVIPGLVTSAAISHEDYPADEGDQISSNDNLIFDDYRGKGCVDDSGFVYKLGERFFPGHSNCPCVCALDGPVCDQPECPKIHPKCTKVEHNGCCPECKEVKNFCEYHGKNYKILEEFKVCVTLHTY.

A signal peptide spans 1–21; the sequence is MALHIHEACILLLVIPGLVTS. One can recognise a VWFC domain in the interval 51–110; that stretch reads KGCVDDSGFVYKLGERFFPGHSNCPCVCALDGPVCDQPECPKIHPKCTKVEHNGCCPECK.

As to quaternary structure, peripherally associated with AMPAR complex. AMPAR complex consists of an inner core made of 4 pore-forming GluA/GRIA proteins (GRIA1, GRIA2, GRIA3 and GRIA4) and 4 major auxiliary subunits arranged in a twofold symmetry. One of the two pairs of distinct binding sites is occupied either by CNIH2, CNIH3 or CACNG2, CACNG3. The other harbors CACNG2, CACNG3, CACNG4, CACNG8 or GSG1L. This inner core of AMPAR complex is complemented by outer core constituents binding directly to the GluA/GRIA proteins at sites distinct from the interaction sites of the inner core constituents. Outer core constituents include at least PRRT1, PRRT2, CKAMP44/SHISA9, FRRS1L and NRN1. The proteins of the inner and outer core serve as a platform for other, more peripherally associated AMPAR constituents, including VWC2L. Alone or in combination, these auxiliary subunits control the gating and pharmacology of the AMPAR complex and profoundly impact their biogenesis and protein processing.

It is found in the secreted. It localises to the synapse. In terms of biological role, may play a role in neurogenesis. May play a role in bone differentiation and matrix mineralization. This chain is von Willebrand factor C domain-containing protein 2-like (VWC2L), found in Macaca fascicularis (Crab-eating macaque).